A 399-amino-acid chain; its full sequence is O-antigen polymerase (399 aa).

The next 10 helical transmembrane spans lie at 4 to 24 (FPPG…LVLV), 37 to 57 (LVFT…LTIF), 64 to 84 (AIMG…LVIL), 97 to 117 (IVCY…IDVL), 151 to 171 (GGFS…LLCM), 185 to 205 (IISF…AILV), 222 to 242 (FCGI…TNIF), 309 to 329 (FFWI…IYLA), 353 to 373 (LYFL…APSS), and 374 to 394 (STFS…KLTN).

The protein localises to the cell inner membrane. The enzyme catalyses n lipid-linked O-antigen repeat units = a lipid-linked O antigen + (n-1) polyisoprenyl diphosphate.. It participates in bacterial outer membrane biogenesis; LPS O-antigen biosynthesis. Functionally, polymerase involved in the biosynthesis of the lipopolysaccharide (LPS). Catalyzes the polymerization of the O-antigen repeat units on the periplasmic face of the inner membrane, leading to the formation of the lipid-linked O-antigen molecule. In Salmonella muenchen, this protein is O-antigen polymerase.